A 30-amino-acid chain; its full sequence is Uperin-6.2 (30 aa).

Expressed by the skin dorsal glands.

The protein resides in the secreted. The protein is Uperin-6.2 of Uperoleia inundata (Floodplain toadlet).